Consider the following 796-residue polypeptide: N-terminal acetyltransferase B complex subunit MDM20 (796 aa).

Ser2 carries the post-translational modification N-acetylserine.

The protein belongs to the MDM20/NAA25 family. As to quaternary structure, component of the N-terminal acetyltransferase B (NatB) complex, which is composed of NAT3 and MDM20.

It is found in the cytoplasm. Its function is as follows. Non-catalytic subunit of the NatB N-terminal acetyltransferase, which catalyzes acetylation of the amino-terminal methionine residues of all proteins beginning with Met-Asp or Met-Glu and of some proteins beginning with Met-Asn or Met-Met. NatB acetylates TPM1 protein and regulates tropomyocin-actin interactions. MDM20 is required for mitochondrial inheritance during budding and together with TPM1, is essential for the integrity and assembly of actin cables. Genetically interacts with CIN8. This chain is N-terminal acetyltransferase B complex subunit MDM20 (MDM20), found in Saccharomyces cerevisiae (strain ATCC 204508 / S288c) (Baker's yeast).